A 234-amino-acid polypeptide reads, in one-letter code: Large ribosomal subunit protein uL1 (234 aa).

Belongs to the universal ribosomal protein uL1 family. In terms of assembly, part of the 50S ribosomal subunit.

Functionally, binds directly to 23S rRNA. The L1 stalk is quite mobile in the ribosome, and is involved in E site tRNA release. In terms of biological role, protein L1 is also a translational repressor protein, it controls the translation of the L11 operon by binding to its mRNA. The protein is Large ribosomal subunit protein uL1 of Bdellovibrio bacteriovorus (strain ATCC 15356 / DSM 50701 / NCIMB 9529 / HD100).